We begin with the raw amino-acid sequence, 458 residues long: Phenylalanine-specific permease (458 aa).

The Cytoplasmic portion of the chain corresponds to 1 to 27 (MKNASTVSEDTASNQEPTLHRGLHNRH). The helical transmembrane segment at 28–48 (IQLIALGGAIGTGLFLGIGPA) threads the bilayer. Topologically, residues 49–50 (IQ) are periplasmic. Residues 51-71 (MAGPAVLLGYGVAGIIAFLIM) traverse the membrane as a helical segment. At 72-105 (RQLGEMVVEEPVSGSFAHFAYKYWGPFAGFLSGW) the chain is on the cytoplasmic side. Residues 106 to 126 (NYWVMFVLVGMAELTAAGIYM) form a helical membrane-spanning segment. Residues 127 to 132 (QYWFPD) are Periplasmic-facing. Residues 133 to 153 (VPTWIWAAAFFIIINAVNLVN) form a helical membrane-spanning segment. At 154 to 160 (VRLYGET) the chain is on the cytoplasmic side. Residues 161–181 (EFWFALIKVLAIIGMIGFGLW) traverse the membrane as a helical segment. The Periplasmic segment spans residues 182–196 (LLFSGHGGEKASIDN). The helical transmembrane segment at 197–217 (LWRYGGFFATGWNGLILSLAV) threads the bilayer. Residues 218–250 (IMFSFGGLELIGITAAEARDPEKSIPKAVNQVV) are Cytoplasmic-facing. A helical transmembrane segment spans residues 251-271 (YRILLFYIGSLVVLLALYPWV). Over 272 to 288 (EVKSNSSPFVMIFHNLD) the chain is Periplasmic. A helical transmembrane segment spans residues 289-309 (SNVVASALNFVILVASLSVYN). Residues 310–341 (SGVYSNSRMLFGLSVQGNAPKFLTRVSRRGVP) are Cytoplasmic-facing. Residues 342-362 (INSLMLSGAITSLVVLINYLL) traverse the membrane as a helical segment. At 363 to 367 (PQKAF) the chain is on the periplasmic side. Residues 368–388 (GLLMALVVATLLLNWIMICLA) form a helical membrane-spanning segment. The Cytoplasmic portion of the chain corresponds to 389 to 411 (HLRFRAAMRRQGRETQFKALLYP). A helical membrane pass occupies residues 412–432 (FGNYLCIAFLGMILLLMCTMD). Topologically, residues 433-434 (DM) are periplasmic. Residues 435 to 455 (RLSAILLPVWIVFLFMAFKTL) form a helical membrane-spanning segment. The Cytoplasmic portion of the chain corresponds to 456–458 (RRK).

It belongs to the amino acid-polyamine-organocation (APC) superfamily. Amino acid transporter (AAT) (TC 2.A.3.1) family.

It is found in the cell inner membrane. It carries out the reaction L-phenylalanine(in) + H(+)(in) = L-phenylalanine(out) + H(+)(out). Functionally, permease that is involved in the active transport across the cytoplasmic membrane of phenylalanine. Can also transport tyrosine, but not tryptophan. The protein is Phenylalanine-specific permease of Escherichia coli (strain K12).